Consider the following 184-residue polypeptide: MSGKLTVITGPMYSGKTTELLSFVEIYKLGKKKVAVFKPKIDSRYHSTMIVSHSGNGVEAHVIERPEEMRKYIEEDTRGVFIDEVQFFNPSLFEVVKDLLDRGIDVFCAGLDLTHKQNPFETTALLLSLADTVIKKKAVCHRCGEYNATLTLKVAGGEEEIDVGGQEKYIAVCRDCYNTLKKRV.

ATP-binding positions include 10–17, H53, and 83–86; these read GPMYSGKT and DEVQ. E84 acts as the Proton acceptor in catalysis. Position 115 (H115) interacts with substrate. Residues C140 and C143 each contribute to the Zn(2+) site. Substrate contacts are provided by residues 161 to 164 and Y169; that span reads IDVG. Positions 173 and 176 each coordinate Zn(2+).

It belongs to the thymidine kinase family. As to quaternary structure, homotetramer.

It localises to the cytoplasm. It carries out the reaction thymidine + ATP = dTMP + ADP + H(+). This is Thymidine kinase (tdk) from Thermotoga maritima (strain ATCC 43589 / DSM 3109 / JCM 10099 / NBRC 100826 / MSB8).